A 170-amino-acid polypeptide reads, in one-letter code: Nicotinamide-nucleotide adenylyltransferase (170 aa).

The protein belongs to the archaeal NMN adenylyltransferase family.

The protein resides in the cytoplasm. It carries out the reaction beta-nicotinamide D-ribonucleotide + ATP + H(+) = diphosphate + NAD(+). It participates in cofactor biosynthesis; NAD(+) biosynthesis; NAD(+) from nicotinamide D-ribonucleotide: step 1/1. In Methanothrix thermoacetophila (strain DSM 6194 / JCM 14653 / NBRC 101360 / PT) (Methanosaeta thermophila), this protein is Nicotinamide-nucleotide adenylyltransferase.